We begin with the raw amino-acid sequence, 306 residues long: Manganese-binding lipoprotein MntA (306 aa).

Residues 1–18 form the signal peptide; that stretch reads MRQGLMAAVLFATFALTG. The N-palmitoyl cysteine moiety is linked to residue cysteine 19. Cysteine 19 is lipidated: S-diacylglycerol cysteine. Mn(2+) is bound by residues histidine 66, histidine 132, histidine 198, and aspartate 278.

It belongs to the bacterial solute-binding protein 9 family. As to quaternary structure, the complex is probably composed of two ATP-binding proteins (MntB), two transmembrane proteins (MntC and MntD) and a solute-binding protein (MntA). Interacts with FloT.

The protein resides in the cell membrane. Its subcellular location is the membrane raft. Functionally, probably part of ATP-binding cassette (ABC) transport system MntABCD involved in manganese import. Binds manganese and delivers it to the membrane permease for translocation into the cytoplasm. This is Manganese-binding lipoprotein MntA from Bacillus subtilis (strain 168).